The sequence spans 1483 residues: Heme-responsive zinc finger transcription factor HAP1 (1483 aa).

Over residues 1-50 (MSNTPYNSSVPSIASMTQSSVSRSPNMHTATTPGANTSSNSPPLHMSSDS) the composition is skewed to polar residues. The segment at 1-56 (MSNTPYNSSVPSIASMTQSSVSRSPNMHTATTPGANTSSNSPPLHMSSDSSKIKRK) is disordered. Zn(2+) is bound by residues Cys-64, Cys-67, Cys-74, Cys-81, Cys-84, and Cys-93. Positions 64-93 (CTICRKRKVKCDKLRPHCQQCTKTGVAHLC) form a DNA-binding region, zn(2)-C6 fungal-type. Residues 105-134 (EKELLKDNELKKLRERVKSLEKTLSKVHSS) adopt a coiled-coil conformation. Residues 162–176 (VNANTGSASSASHMH) show a composition bias toward polar residues. The segment at 162–208 (VNANTGSASSASHMHQQQQQQQQQEQQQDFSRSANANANSSSLSISN) is disordered. Residues 177 to 208 (QQQQQQQQQEQQQDFSRSANANANSSSLSISN) are compositionally biased toward low complexity. The tract at residues 244–444 (KGDPYLKLLW…NTIPHHQPQS (201 aa)) is heme-responsive; required for HMC formation. HRM repeat units follow at residues 280-285 (KCPINH), 299-304 (KCPVDH), 323-328 (KCPVDH), 347-352 (RCPVDH), 389-394 (KCPVDH), and 415-420 (RCPIDH). 2 stretches are compositionally biased toward polar residues: residues 432-447 (STHNTIPHHQPQSGSH) and 706-734 (QLNATIPATSQDVSNNGSKKANPSTNPTL). Disordered regions lie at residues 432-458 (STHNTIPHHQPQSGSHARSHPAQNRKH) and 706-767 (QLNA…KENQ). Residues 735–759 (NNNMSAATTNSSSRSGSADSRSGSN) show a composition bias toward low complexity. One copy of the HRM 7 repeat lies at 1192 to 1197 (KCPVYQ). Positions 1384-1411 (TANTDTSANGSALSTLTSPQGSDLASNS) are disordered. Polar residues predominate over residues 1388–1411 (DTSANGSALSTLTSPQGSDLASNS).

As to quaternary structure, binds DNA as a homodimer. Interacts with SRO9 and YDJ1. In the absence of heme, binds to at least four cellular proteins, including YDJ1 and SRO9, forming a high-molecular-weight complex (HMC) which results in repression of its activity and dictates its DNA-binding specificity.

It is found in the nucleus. In terms of biological role, regulation of oxygen dependent gene expression. It modulates the expression of Iso-1 (CYP1) and Iso-2 (CYP3) cytochrome c. In response to heme, promotes transcription of genes encoding functions required for respiration, controlling oxidative damage and repression of anaerobic genes. Binds to the sequence 5'-CGGNNNTNNCGG-3'. The sequence is that of Heme-responsive zinc finger transcription factor HAP1 (HAP1) from Saccharomyces cerevisiae (strain RM11-1a) (Baker's yeast).